Consider the following 352-residue polypeptide: Holliday junction branch migration complex subunit RuvB (352 aa).

The interval 1 to 42 (MAIVSSSAGRADSQPPAAKSRVVDASPLPEEASPAREDGLRP) is disordered. The large ATPase domain (RuvB-L) stretch occupies residues 13–201 (SQPPAAKSRV…FGLIQRLEFY (189 aa)). Residues 33–42 (SPAREDGLRP) are compositionally biased toward basic and acidic residues. Leu-40, Arg-41, Gly-82, Lys-85, Thr-86, Thr-87, Arg-191, Tyr-201, and Arg-238 together coordinate ATP. Thr-86 serves as a coordination point for Mg(2+). The interval 202–273 (GLEDLQAIVE…LVDEALTLHR (72 aa)) is small ATPAse domain (RuvB-S). The head domain (RuvB-H) stretch occupies residues 276–352 (ARGLDASDRR…RRHLGWPELP (77 aa)). DNA is bound by residues Arg-331 and Arg-336.

The protein belongs to the RuvB family. As to quaternary structure, homohexamer. Forms an RuvA(8)-RuvB(12)-Holliday junction (HJ) complex. HJ DNA is sandwiched between 2 RuvA tetramers; dsDNA enters through RuvA and exits via RuvB. An RuvB hexamer assembles on each DNA strand where it exits the tetramer. Each RuvB hexamer is contacted by two RuvA subunits (via domain III) on 2 adjacent RuvB subunits; this complex drives branch migration. In the full resolvosome a probable DNA-RuvA(4)-RuvB(12)-RuvC(2) complex forms which resolves the HJ.

The protein resides in the cytoplasm. The enzyme catalyses ATP + H2O = ADP + phosphate + H(+). The RuvA-RuvB-RuvC complex processes Holliday junction (HJ) DNA during genetic recombination and DNA repair, while the RuvA-RuvB complex plays an important role in the rescue of blocked DNA replication forks via replication fork reversal (RFR). RuvA specifically binds to HJ cruciform DNA, conferring on it an open structure. The RuvB hexamer acts as an ATP-dependent pump, pulling dsDNA into and through the RuvAB complex. RuvB forms 2 homohexamers on either side of HJ DNA bound by 1 or 2 RuvA tetramers; 4 subunits per hexamer contact DNA at a time. Coordinated motions by a converter formed by DNA-disengaged RuvB subunits stimulates ATP hydrolysis and nucleotide exchange. Immobilization of the converter enables RuvB to convert the ATP-contained energy into a lever motion, pulling 2 nucleotides of DNA out of the RuvA tetramer per ATP hydrolyzed, thus driving DNA branch migration. The RuvB motors rotate together with the DNA substrate, which together with the progressing nucleotide cycle form the mechanistic basis for DNA recombination by continuous HJ branch migration. Branch migration allows RuvC to scan DNA until it finds its consensus sequence, where it cleaves and resolves cruciform DNA. This is Holliday junction branch migration complex subunit RuvB from Prochlorococcus marinus (strain MIT 9313).